The sequence spans 374 residues: S-adenosylmethionine:tRNA ribosyltransferase-isomerase (374 aa).

It belongs to the QueA family. Monomer.

It is found in the cytoplasm. The enzyme catalyses 7-aminomethyl-7-carbaguanosine(34) in tRNA + S-adenosyl-L-methionine = epoxyqueuosine(34) in tRNA + adenine + L-methionine + 2 H(+). The protein operates within tRNA modification; tRNA-queuosine biosynthesis. Its function is as follows. Transfers and isomerizes the ribose moiety from AdoMet to the 7-aminomethyl group of 7-deazaguanine (preQ1-tRNA) to give epoxyqueuosine (oQ-tRNA). In Prochlorococcus marinus (strain MIT 9215), this protein is S-adenosylmethionine:tRNA ribosyltransferase-isomerase.